The following is a 122-amino-acid chain: Modulator protein MzrA (122 aa).

At 1 to 10 (MKILTRIPRR) the chain is on the cytoplasmic side. The chain crosses the membrane as a helical span at residues 11 to 31 (LLPWLLGGALALVAVSFAPAL). Over 32–122 (LSHETVVQIR…NQDANRSIYS (91 aa)) the chain is Periplasmic.

Belongs to the MzrA family. In terms of assembly, interacts with EnvZ.

It localises to the cell inner membrane. In terms of biological role, modulates the activity of the EnvZ/OmpR two-component regulatory system, probably by directly modulating EnvZ enzymatic activity and increasing stability of phosphorylated OmpR. This chain is Modulator protein MzrA, found in Pantoea sp. (strain At-9b).